The sequence spans 81 residues: Acyl carrier protein (81 aa).

A Carrier domain is found at 2-80; the sequence is SKVDNIEQKV…DVVNYIKEHK (79 aa). The residue at position 40 (S40) is an O-(pantetheine 4'-phosphoryl)serine.

This sequence belongs to the acyl carrier protein (ACP) family. Post-translationally, 4'-phosphopantetheine is transferred from CoA to a specific serine of apo-ACP by AcpS. This modification is essential for activity because fatty acids are bound in thioester linkage to the sulfhydryl of the prosthetic group.

It localises to the cytoplasm. It functions in the pathway lipid metabolism; fatty acid biosynthesis. Carrier of the growing fatty acid chain in fatty acid biosynthesis. This is Acyl carrier protein from Rickettsia bellii (strain OSU 85-389).